The sequence spans 83 residues: UPF0346 protein M28_Spy0369 (83 aa).

The protein belongs to the UPF0346 family.

The sequence is that of UPF0346 protein M28_Spy0369 from Streptococcus pyogenes serotype M28 (strain MGAS6180).